Here is a 191-residue protein sequence, read N- to C-terminus: Fe/S biogenesis protein NfuA (191 aa).

[4Fe-4S] cluster is bound by residues C149 and C152.

Belongs to the NfuA family. Homodimer. The cofactor is [4Fe-4S] cluster.

Functionally, involved in iron-sulfur cluster biogenesis. Binds a 4Fe-4S cluster, can transfer this cluster to apoproteins, and thereby intervenes in the maturation of Fe/S proteins. Could also act as a scaffold/chaperone for damaged Fe/S proteins. This Escherichia coli O7:K1 (strain IAI39 / ExPEC) protein is Fe/S biogenesis protein NfuA.